The chain runs to 528 residues: GMP synthase [glutamine-hydrolyzing] (528 aa).

The region spanning 3–199 (KVAIIDFGSQ…FLDIAGCQKD (197 aa)) is the Glutamine amidotransferase type-1 domain. The active-site Nucleophile is Cys83. Active-site residues include His174 and Glu176. The GMPS ATP-PPase domain occupies 200-394 (WTVTSFIDDQ…LGISTEILMR (195 aa)). 227–233 (SGGVDSS) is a binding site for ATP.

In terms of assembly, homodimer.

The catalysed reaction is XMP + L-glutamine + ATP + H2O = GMP + L-glutamate + AMP + diphosphate + 2 H(+). It functions in the pathway purine metabolism; GMP biosynthesis; GMP from XMP (L-Gln route): step 1/1. Its function is as follows. Catalyzes the synthesis of GMP from XMP. This chain is GMP synthase [glutamine-hydrolyzing], found in Ehrlichia ruminantium (strain Welgevonden).